The sequence spans 210 residues: MIATTRDREGATMITFRLRLPCRTILRVFSRNSLVRGTDRLEAVVMLLAVTVSLLTIPFAAAAGTAVHDSRSHVYAHQAQTRHPATATVIDHEGVIDSNTTATSAPPRTKITVPARWVVNGIERSGEVNAKPGTKSGDRVGIWVDSAGQLVDEPAPPARAIADAALAALGLWLSVAAVAGALLALTRAILIRVRNASWQHDIDSLFCTQR.

2 helical membrane passes run 43–63 and 165–185; these read AVVM…AAAA and ALAA…LLAL.

Its subcellular location is the cell membrane. The protein is Probable membrane protein MT1774 of Mycobacterium tuberculosis (strain CDC 1551 / Oshkosh).